The primary structure comprises 160 residues: Allophycocyanin alpha chain (160 aa).

Asparagine 70 carries the post-translational modification N4-methylasparagine. Cysteine 80 contributes to the (2R,3E)-phycocyanobilin binding site.

The protein belongs to the phycobiliprotein family. As to quaternary structure, component of the phycobilisome. Heterodimer of an alpha and a beta chain. Post-translationally, contains one covalently linked phycocyanobilin chromophore.

It is found in the cellular thylakoid membrane. Its function is as follows. Light-harvesting photosynthetic bile pigment-protein from the phycobiliprotein complex. Allophycocyanin has a maximum absorption at approximately 650 nanometers. The sequence is that of Allophycocyanin alpha chain (apcA) from Anabaena cylindrica.